Consider the following 313-residue polypeptide: uncharacterized protein (313 aa).

This is an uncharacterized protein from Archaeoglobus fulgidus (strain ATCC 49558 / DSM 4304 / JCM 9628 / NBRC 100126 / VC-16).